The following is a 90-amino-acid chain: Small ribosomal subunit protein uS19 (90 aa).

It belongs to the universal ribosomal protein uS19 family.

Its function is as follows. Protein S19 forms a complex with S13 that binds strongly to the 16S ribosomal RNA. This is Small ribosomal subunit protein uS19 from Thioalkalivibrio sulfidiphilus (strain HL-EbGR7).